Here is a 367-residue protein sequence, read N- to C-terminus: CCN family member 4 (367 aa).

An N-terminal signal peptide occupies residues 1-22; the sequence is MRWLLPWTLAAVAVLRVGNILA. Positions 45 to 118 constitute an IGFBP N-terminal domain; that stretch reads RPEFCKWPCE…RYAIGVCAQV (74 aa). Disulfide bonds link Cys49-Cys73, Cys53-Cys75, Cys55-Cys76, and Cys62-Cys79. Asn86 is a glycosylation site (N-linked (GlcNAc...) asparagine). Cystine bridges form between Cys87–Cys101 and Cys93–Cys115. The VWFC domain maps to 121–186; that stretch reads VGCVLDGVRY…GQCCEQWVCD (66 aa). An N-linked (GlcNAc...) asparagine glycan is attached at Asn143. Positions 215-260 constitute a TSP type-1 domain; the sequence is NCIAYTSPWSPCSTTCGLGISTRISNVNARCWPEQESRLCNLRPCD. Disulfide bonds link Cys273–Cys310, Cys290–Cys324, Cys301–Cys340, Cys304–Cys342, and Cys309–Cys346. The 75-residue stretch at 273 to 347 folds into the CTCK domain; that stretch reads CLAVYQPEEA…NACFCNLSCR (75 aa). N-linked (GlcNAc...) asparagine glycosylation occurs at Asn284. N-linked (GlcNAc...) asparagine glycosylation occurs at Asn343.

It belongs to the CCN family. In terms of tissue distribution, highly expressed in kidney and lung. Lower levels in heart, brain, spleen, liver, skeletal muscle and testis. Expressed in low metastatic melanoma cells.

It localises to the secreted. Downstream regulator in the Wnt/Frizzled-signaling pathway. Associated with cell survival. Adheres to skin and melanoma fibroblasts. In vitro binding to skin fibroblasts occurs through the proteoglycans, decorin and biglycan. Suppresses tumor growth in vivo. The chain is CCN family member 4 (Ccn4) from Mus musculus (Mouse).